The following is a 319-amino-acid chain: ATP-dependent 6-phosphofructokinase (319 aa).

G11 contributes to the ATP binding site. 21 to 25 provides a ligand contact to ADP; that stretch reads RAVVR. ATP contacts are provided by residues 72–73 and 102–105; these read RC and GNGS. N103 is a Mg(2+) binding site. A substrate-binding site is contributed by 125–127; sequence TID. The active-site Proton acceptor is D127. R154 is a binding site for ADP. Residues R162 and 169–171 contribute to the substrate site; that span reads MGR. Residues 185-187, R211, and 213-215 each bind ADP; these read GAE and KMH. Substrate contacts are provided by residues E222, R243, and 249 to 252; that span reads HIQR.

It belongs to the phosphofructokinase type A (PFKA) family. ATP-dependent PFK group I subfamily. Prokaryotic clade 'B1' sub-subfamily. In terms of assembly, homotetramer. Mg(2+) is required as a cofactor.

The protein resides in the cytoplasm. It carries out the reaction beta-D-fructose 6-phosphate + ATP = beta-D-fructose 1,6-bisphosphate + ADP + H(+). The protein operates within carbohydrate degradation; glycolysis; D-glyceraldehyde 3-phosphate and glycerone phosphate from D-glucose: step 3/4. Allosterically activated by ADP and other diphosphonucleosides, and allosterically inhibited by phosphoenolpyruvate. Catalyzes the phosphorylation of D-fructose 6-phosphate to fructose 1,6-bisphosphate by ATP, the first committing step of glycolysis. The protein is ATP-dependent 6-phosphofructokinase of Clostridium acetobutylicum (strain ATCC 824 / DSM 792 / JCM 1419 / IAM 19013 / LMG 5710 / NBRC 13948 / NRRL B-527 / VKM B-1787 / 2291 / W).